The sequence spans 448 residues: Cytoplasmic tRNA 2-thiolation protein 2 (448 aa).

It belongs to the CTU2/NCS2 family.

The protein localises to the cytoplasm. Its pathway is tRNA modification; 5-methoxycarbonylmethyl-2-thiouridine-tRNA biosynthesis. Functionally, plays a central role in 2-thiolation of mcm(5)S(2)U at tRNA wobble positions of tRNA(Lys), tRNA(Glu) and tRNA(Gln). May act by forming a heterodimer with NCS6 that ligates sulfur from thiocarboxylated URM1 onto the uridine of tRNAs at wobble position. Prior mcm(5) tRNA modification by the elongator complex is required for 2-thiolation. May also be involved in protein urmylation. The polypeptide is Cytoplasmic tRNA 2-thiolation protein 2 (Scheffersomyces stipitis (strain ATCC 58785 / CBS 6054 / NBRC 10063 / NRRL Y-11545) (Yeast)).